Here is a 322-residue protein sequence, read N- to C-terminus: Glycerate dehydrogenase (322 aa).

Residues 158 to 159, Asp-178, 239 to 241, and Asp-265 contribute to the NAD(+) site; these read SI and TAR. The active site involves Arg-241. Residue Glu-270 is part of the active site. Catalysis depends on His-288, which acts as the Proton donor. Residue 288 to 291 participates in NAD(+) binding; it reads HIGS.

Belongs to the D-isomer specific 2-hydroxyacid dehydrogenase family. Homodimer.

It catalyses the reaction (R)-glycerate + NAD(+) = 3-hydroxypyruvate + NADH + H(+). Its pathway is one-carbon metabolism; formaldehyde assimilation via serine pathway. In terms of biological role, active on hydroxypyruvate and glyoxylate. This chain is Glycerate dehydrogenase, found in Hyphomicrobium methylovorum.